We begin with the raw amino-acid sequence, 232 residues long: Orotidine 5'-phosphate decarboxylase (232 aa).

Residues D11, K32, 59-68 (DLKFHDIPNT), T118, R180, Q189, G209, and R210 each bind substrate. K61 serves as the catalytic Proton donor.

The protein belongs to the OMP decarboxylase family. Type 1 subfamily. In terms of assembly, homodimer.

The enzyme catalyses orotidine 5'-phosphate + H(+) = UMP + CO2. It functions in the pathway pyrimidine metabolism; UMP biosynthesis via de novo pathway; UMP from orotate: step 2/2. Catalyzes the decarboxylation of orotidine 5'-monophosphate (OMP) to uridine 5'-monophosphate (UMP). This Gloeothece citriformis (strain PCC 7424) (Cyanothece sp. (strain PCC 7424)) protein is Orotidine 5'-phosphate decarboxylase.